Reading from the N-terminus, the 254-residue chain is 14-3-3 protein 2 (254 aa).

It belongs to the 14-3-3 family. Homodimer.

This is 14-3-3 protein 2 (TFT2) from Solanum lycopersicum (Tomato).